A 191-amino-acid polypeptide reads, in one-letter code: Protein GrpE (191 aa).

It belongs to the GrpE family. Homodimer.

It localises to the cytoplasm. In terms of biological role, participates actively in the response to hyperosmotic and heat shock by preventing the aggregation of stress-denatured proteins, in association with DnaK and GrpE. It is the nucleotide exchange factor for DnaK and may function as a thermosensor. Unfolded proteins bind initially to DnaJ; upon interaction with the DnaJ-bound protein, DnaK hydrolyzes its bound ATP, resulting in the formation of a stable complex. GrpE releases ADP from DnaK; ATP binding to DnaK triggers the release of the substrate protein, thus completing the reaction cycle. Several rounds of ATP-dependent interactions between DnaJ, DnaK and GrpE are required for fully efficient folding. This Listeria monocytogenes serotype 4b (strain CLIP80459) protein is Protein GrpE.